A 178-amino-acid chain; its full sequence is Large ribosomal subunit protein uL6 (178 aa).

It belongs to the universal ribosomal protein uL6 family. As to quaternary structure, part of the 50S ribosomal subunit.

This protein binds to the 23S rRNA, and is important in its secondary structure. It is located near the subunit interface in the base of the L7/L12 stalk, and near the tRNA binding site of the peptidyltransferase center. The sequence is that of Large ribosomal subunit protein uL6 from Francisella tularensis subsp. tularensis (strain FSC 198).